Reading from the N-terminus, the 209-residue chain is Glycerol-3-phosphate acyltransferase (209 aa).

A run of 5 helical transmembrane segments spans residues 5-25 (IIGM…LWIG), 50-70 (LGFK…TLAA), 74-94 (YFLG…ASLG), 115-135 (ILLA…IFVL), and 151-171 (AIFI…AGIL).

It belongs to the PlsY family. In terms of assembly, probably interacts with PlsX.

It is found in the cell membrane. It carries out the reaction an acyl phosphate + sn-glycerol 3-phosphate = a 1-acyl-sn-glycero-3-phosphate + phosphate. Its pathway is lipid metabolism; phospholipid metabolism. Functionally, catalyzes the transfer of an acyl group from acyl-phosphate (acyl-PO(4)) to glycerol-3-phosphate (G3P) to form lysophosphatidic acid (LPA). This enzyme utilizes acyl-phosphate as fatty acyl donor, but not acyl-CoA or acyl-ACP. The sequence is that of Glycerol-3-phosphate acyltransferase from Limosilactobacillus reuteri (strain DSM 20016) (Lactobacillus reuteri).